The primary structure comprises 474 residues: tRNA modification GTPase MnmE (474 aa).

Positions 35, 92, and 135 each coordinate (6S)-5-formyl-5,6,7,8-tetrahydrofolate. Residues 231–396 enclose the TrmE-type G domain; the sequence is GLHVVLAGQP…LRAALLEIAG (166 aa). Asn-241 contributes to the K(+) binding site. GTP contacts are provided by residues 241–246, 260–266, 285–288, and 377–379; these read NVGKSS, TPIAGTT, DTAG, and SAR. Ser-245 contributes to the Mg(2+) binding site. 3 residues coordinate K(+): Thr-260, Ile-262, and Thr-265. Thr-266 is a Mg(2+) binding site. Lys-474 contacts (6S)-5-formyl-5,6,7,8-tetrahydrofolate.

It belongs to the TRAFAC class TrmE-Era-EngA-EngB-Septin-like GTPase superfamily. TrmE GTPase family. In terms of assembly, homodimer. Heterotetramer of two MnmE and two MnmG subunits. K(+) serves as cofactor.

The protein localises to the cytoplasm. Its function is as follows. Exhibits a very high intrinsic GTPase hydrolysis rate. Involved in the addition of a carboxymethylaminomethyl (cmnm) group at the wobble position (U34) of certain tRNAs, forming tRNA-cmnm(5)s(2)U34. The sequence is that of tRNA modification GTPase MnmE from Ralstonia nicotianae (strain ATCC BAA-1114 / GMI1000) (Ralstonia solanacearum).